Consider the following 835-residue polypeptide: Protein translocase subunit SecA (835 aa).

Residues glutamine 85, 103–107 (GEGKT), and aspartate 492 contribute to the ATP site. The Zn(2+) site is built by cysteine 819, cysteine 821, cysteine 830, and cysteine 831.

This sequence belongs to the SecA family. Monomer and homodimer. Part of the essential Sec protein translocation apparatus which comprises SecA, SecYEG and auxiliary proteins SecDF. Other proteins may also be involved. Zn(2+) serves as cofactor.

Its subcellular location is the cell membrane. The protein resides in the cytoplasm. It catalyses the reaction ATP + H2O + cellular proteinSide 1 = ADP + phosphate + cellular proteinSide 2.. In terms of biological role, part of the Sec protein translocase complex. Interacts with the SecYEG preprotein conducting channel. Has a central role in coupling the hydrolysis of ATP to the transfer of proteins into and across the cell membrane, serving as an ATP-driven molecular motor driving the stepwise translocation of polypeptide chains across the membrane. The protein is Protein translocase subunit SecA of Clostridium botulinum (strain Okra / Type B1).